A 201-amino-acid polypeptide reads, in one-letter code: Small ribosomal subunit protein uS4c (201 aa).

The segment at 20-43 (GLTSKRPRAGSDLRNQSRSGKRSQ) is disordered. The 61-residue stretch at 89–149 (MRLDNILFRL…DEQKSRALIQ (61 aa)) folds into the S4 RNA-binding domain.

It belongs to the universal ribosomal protein uS4 family. As to quaternary structure, part of the 30S ribosomal subunit. Contacts protein S5. The interaction surface between S4 and S5 is involved in control of translational fidelity.

It localises to the plastid. The protein localises to the chloroplast. Its function is as follows. One of the primary rRNA binding proteins, it binds directly to 16S rRNA where it nucleates assembly of the body of the 30S subunit. Functionally, with S5 and S12 plays an important role in translational accuracy. The polypeptide is Small ribosomal subunit protein uS4c (rps4) (Buxus microphylla (Littleleaf boxwood)).